Reading from the N-terminus, the 396-residue chain is 3-amino-4-hydroxybenzoic acid synthase (396 aa).

A disordered region spans residues 1–29; it reads MSSSPSPSPSSSSSSSASSSASSSPSSSS.

It belongs to the archaeal-type DHQ synthase family. GriH subfamily. As to quaternary structure, monomer. Mn(2+) is required as a cofactor.

The catalysed reaction is 2-amino-4,5-dihydroxy-6-oxo-7-(phosphooxy)heptanoate = 3-amino-4-hydroxybenzoate + phosphate + 2 H2O + H(+). Its function is as follows. Catalyzes the cyclization of 2-amino-4,5-dihydroxy-6-one-heptanoic acid-7-phosphate to yield 3-amino-4-hydroxybenzoic acid (3,4-AHBA). In Streptomyces griseus subsp. griseus (strain JCM 4626 / CBS 651.72 / NBRC 13350 / KCC S-0626 / ISP 5235), this protein is 3-amino-4-hydroxybenzoic acid synthase (griH).